The following is a 483-amino-acid chain: Altronate oxidoreductase (483 aa).

Residue 18–29 coordinates NAD(+); that stretch reads IIQFGEGNFLRA.

Belongs to the mannitol dehydrogenase family. UxaB subfamily.

It carries out the reaction D-altronate + NAD(+) = keto-D-tagaturonate + NADH + H(+). It functions in the pathway carbohydrate metabolism; pentose and glucuronate interconversion. In Klebsiella pneumoniae subsp. pneumoniae (strain ATCC 700721 / MGH 78578), this protein is Altronate oxidoreductase.